Consider the following 226-residue polypeptide: Enolase-phosphatase E1 (226 aa).

The protein belongs to the HAD-like hydrolase superfamily. MasA/MtnC family. As to quaternary structure, monomer. Mg(2+) is required as a cofactor.

It catalyses the reaction 5-methylsulfanyl-2,3-dioxopentyl phosphate + H2O = 1,2-dihydroxy-5-(methylsulfanyl)pent-1-en-3-one + phosphate. Its pathway is amino-acid biosynthesis; L-methionine biosynthesis via salvage pathway; L-methionine from S-methyl-5-thio-alpha-D-ribose 1-phosphate: step 3/6. The protein operates within amino-acid biosynthesis; L-methionine biosynthesis via salvage pathway; L-methionine from S-methyl-5-thio-alpha-D-ribose 1-phosphate: step 4/6. Bifunctional enzyme that catalyzes the enolization of 2,3-diketo-5-methylthiopentyl-1-phosphate (DK-MTP-1-P) into the intermediate 2-hydroxy-3-keto-5-methylthiopentenyl-1-phosphate (HK-MTPenyl-1-P), which is then dephosphorylated to form the acireductone 1,2-dihydroxy-3-keto-5-methylthiopentene (DHK-MTPene). This chain is Enolase-phosphatase E1, found in Shewanella frigidimarina (strain NCIMB 400).